Consider the following 557-residue polypeptide: Dihydroxy-acid dehydratase (557 aa).

Cysteine 47 lines the [2Fe-2S] cluster pocket. A Mg(2+)-binding site is contributed by aspartate 79. Residue cysteine 120 coordinates [2Fe-2S] cluster. Mg(2+) contacts are provided by aspartate 121 and lysine 122. Lysine 122 carries the N6-carboxylysine modification. A [2Fe-2S] cluster-binding site is contributed by cysteine 192. Position 444 (glutamate 444) interacts with Mg(2+). The Proton acceptor role is filled by serine 470.

Belongs to the IlvD/Edd family. As to quaternary structure, homodimer. [2Fe-2S] cluster serves as cofactor. It depends on Mg(2+) as a cofactor.

It carries out the reaction (2R)-2,3-dihydroxy-3-methylbutanoate = 3-methyl-2-oxobutanoate + H2O. The catalysed reaction is (2R,3R)-2,3-dihydroxy-3-methylpentanoate = (S)-3-methyl-2-oxopentanoate + H2O. It functions in the pathway amino-acid biosynthesis; L-isoleucine biosynthesis; L-isoleucine from 2-oxobutanoate: step 3/4. The protein operates within amino-acid biosynthesis; L-valine biosynthesis; L-valine from pyruvate: step 3/4. Functions in the biosynthesis of branched-chain amino acids. Catalyzes the dehydration of (2R,3R)-2,3-dihydroxy-3-methylpentanoate (2,3-dihydroxy-3-methylvalerate) into 2-oxo-3-methylpentanoate (2-oxo-3-methylvalerate) and of (2R)-2,3-dihydroxy-3-methylbutanoate (2,3-dihydroxyisovalerate) into 2-oxo-3-methylbutanoate (2-oxoisovalerate), the penultimate precursor to L-isoleucine and L-valine, respectively. The sequence is that of Dihydroxy-acid dehydratase from Synechococcus sp. (strain CC9605).